Reading from the N-terminus, the 555-residue chain is Formate--tetrahydrofolate ligase (555 aa).

An ATP-binding site is contributed by 65–72 (TPAGEGKT).

Belongs to the formate--tetrahydrofolate ligase family.

It carries out the reaction (6S)-5,6,7,8-tetrahydrofolate + formate + ATP = (6R)-10-formyltetrahydrofolate + ADP + phosphate. The protein operates within one-carbon metabolism; tetrahydrofolate interconversion. The polypeptide is Formate--tetrahydrofolate ligase (Syntrophomonas wolfei subsp. wolfei (strain DSM 2245B / Goettingen)).